We begin with the raw amino-acid sequence, 786 residues long: Exo-beta-D-glucosaminidase (786 aa).

Substrate is bound by residues Tyr-53, 102 to 103 (GE), 178 to 179 (DE), Glu-306, Glu-347, and Tyr-379. The active-site Proton donor is the Glu-179. The Nucleophile role is filled by Glu-347.

The protein belongs to the glycosyl hydrolase 35 family. In terms of assembly, homodimer.

The protein localises to the cytoplasm. It carries out the reaction beta-D-glucosaminyl-(1-&gt;4)-N-acetyl-D-glucosamine + H2O = D-glucosamine + N-acetyl-D-glucosamine. It functions in the pathway glycan degradation; chitin degradation. Exo-type enzyme that specifically cleaves the non-reducing terminal glycosidic bond of chitooligosaccharides. Catalyzes the hydrolysis of GlcN-GlcNAc to glucosamine (GlcN) and N-acetylglucosamine (GlcNAc). Involved in chitin degradation. Can also hydrolyze reduced chitobiose (GlcN2OH) and chitooligosaccharides of various chain lengths. The sequence is that of Exo-beta-D-glucosaminidase from Thermococcus kodakarensis (strain ATCC BAA-918 / JCM 12380 / KOD1) (Pyrococcus kodakaraensis (strain KOD1)).